A 780-amino-acid chain; its full sequence is Pumilio domain-containing protein C4G8.03c (780 aa).

3 disordered regions span residues 1 to 29 (MVNRDAYNELNLNKKSQETNRKPSPLSSY), 298 to 330 (LSHFPDHLDPSRIPSPYQPSSLQPLESRKLHSK), and 358 to 411 (NHHS…GKTV). Residues 298–307 (LSHFPDHLDP) show a composition bias toward basic and acidic residues. Low complexity predominate over residues 311–322 (PSPYQPSSLQPL). Over residues 358–382 (NHHSSLSMDNDPTNVSTKNRNNQTV) the composition is skewed to polar residues. The PUM-HD domain maps to 435–778 (EKSDDLSNLL…HILAKLTSST (344 aa)). 9 Pumilio repeats span residues 462–497 (GFLGHLSTICKDQYGCRYLQKLLDENPKVNASLFFP), 498–533 (EIRQSVVQLMIDPFGNYMCQKLFVYASREQKLSMLN), 534–569 (GIGEGIVDICSNLYGTRSMQNIIDKLTSNEQISLLL), 570–606 (KIIIPSLTTLACDNNGTHVLQKCIAKFPPEKLEPLFL), 607–642 (SMEENLITLATNRHGCCILQRCLDRTNGDIQERLVN), 643–678 (SIIKSCLLLVQNAYGNYLVQHVLELNIQPYTERIIE), 679–714 (KFFGNICKLSLQKFSSNAIEQCIRTASPSTREQMLQ), 715–752 (EFLSFPNIEQLLDDCYANYVMQRFLNVADESQKFLILR), and 753–780 (SISHVIPKIQNTRHGRHILAKLTSSTSS).

The polypeptide is Pumilio domain-containing protein C4G8.03c (Schizosaccharomyces pombe (strain 972 / ATCC 24843) (Fission yeast)).